A 214-amino-acid polypeptide reads, in one-letter code: Octanoyltransferase (214 aa).

The BPL/LPL catalytic domain maps to 34–214 (GVQKELVWLL…KFNEIFSNFN (181 aa)). Residues 73–80 (RGGKYTYH), 145–147 (AFG), and 158–160 (GVS) each bind substrate. Cys176 (acyl-thioester intermediate) is an active-site residue.

This sequence belongs to the LipB family.

It localises to the cytoplasm. The enzyme catalyses octanoyl-[ACP] + L-lysyl-[protein] = N(6)-octanoyl-L-lysyl-[protein] + holo-[ACP] + H(+). Its pathway is protein modification; protein lipoylation via endogenous pathway; protein N(6)-(lipoyl)lysine from octanoyl-[acyl-carrier-protein]: step 1/2. In terms of biological role, catalyzes the transfer of endogenously produced octanoic acid from octanoyl-acyl-carrier-protein onto the lipoyl domains of lipoate-dependent enzymes. Lipoyl-ACP can also act as a substrate although octanoyl-ACP is likely to be the physiological substrate. In Ehrlichia chaffeensis (strain ATCC CRL-10679 / Arkansas), this protein is Octanoyltransferase.